The chain runs to 455 residues: UDP-N-acetylmuramoylalanine--D-glutamate ligase (455 aa).

117–123 is a binding site for ATP; sequence GTNGKTT.

It belongs to the MurCDEF family.

It is found in the cytoplasm. The enzyme catalyses UDP-N-acetyl-alpha-D-muramoyl-L-alanine + D-glutamate + ATP = UDP-N-acetyl-alpha-D-muramoyl-L-alanyl-D-glutamate + ADP + phosphate + H(+). It functions in the pathway cell wall biogenesis; peptidoglycan biosynthesis. Cell wall formation. Catalyzes the addition of glutamate to the nucleotide precursor UDP-N-acetylmuramoyl-L-alanine (UMA). The protein is UDP-N-acetylmuramoylalanine--D-glutamate ligase of Alkaliphilus metalliredigens (strain QYMF).